An 810-amino-acid polypeptide reads, in one-letter code: Abnormal pharyngeal pumping eat-20 (810 aa).

Residues 1–20 (MTTFCRVLLIFGIYVAVCCA) form the signal peptide. Residues 21–748 (QSVEDDVFHF…GKQSSAAASW (728 aa)) are Extracellular-facing. Residues Asn90, Asn171, and Asn232 are each glycosylated (N-linked (GlcNAc...) asparagine). EGF-like domains are found at residues 220-257 (PPSP…DRCE), 258-293 (LDVC…LLCE), and 301-335 (VAPI…ANCN). Intrachain disulfides connect Cys224–Cys235, Cys229–Cys245, Cys247–Cys256, Cys261–Cys272, Cys266–Cys281, Cys283–Cys292, Cys305–Cys314, Cys309–Cys323, and Cys325–Cys334. A glycan (N-linked (GlcNAc...) asparagine) is linked at Asn371. A compositionally biased stretch (low complexity) spans 522–531 (FAPTTGTQQP). Disordered regions lie at residues 522–567 (FAPT…STMQ) and 684–738 (PHPQ…HTSS). Positions 542–558 (DENEEEEEEETTEETEE) are enriched in acidic residues. The chain crosses the membrane as a helical span at residues 749-769 (IIAIIALIVLGLLLLATSLFI). The Cytoplasmic segment spans residues 770-810 (LRYIRQSRKLHGKYNPAREEHNLSAAYAMPMSHIAKEERLI).

Highly expressed in the pharynx, circumpharyngeal cells, pharyngeal-intestinal valve and a subset of neurons in larval and embryonic stages. Also moderately expressed in the lining of the intestine, coelomocytes, labial process bundles and some hypodermal cells. In adults, it is predominantly expressed in the pharynx, the pharyngeal-intenstinal valve, some circumpharyngeal cells, m3, m4 and m6 pharyngeal muscles, and IL1, OLQ, BAG and ALN neurons. Weaker expression is observed in labial process bundles, coelomocytes, the ventral hypodermal ridge, the vulval hypodermis and the sensory rays of the adult male tail.

It is found in the membrane. In terms of biological role, regulates pharyngeal pumping during feeding. The sequence is that of Abnormal pharyngeal pumping eat-20 (eat-20) from Caenorhabditis elegans.